The following is a 119-amino-acid chain: Large ribosomal subunit protein bL20 (119 aa).

The protein belongs to the bacterial ribosomal protein bL20 family.

Functionally, binds directly to 23S ribosomal RNA and is necessary for the in vitro assembly process of the 50S ribosomal subunit. It is not involved in the protein synthesizing functions of that subunit. This Methylocella silvestris (strain DSM 15510 / CIP 108128 / LMG 27833 / NCIMB 13906 / BL2) protein is Large ribosomal subunit protein bL20.